The sequence spans 287 residues: Syntaxin-11 (287 aa).

Residues 41–71 (LESLYRDIRDIQDENQLLVADVKRLGKQNAR) are a coiled coil. Positions 204–266 (LNEIESRHRE…GQAKAQVRKA (63 aa)) constitute a t-SNARE coiled-coil homology domain.

It belongs to the syntaxin family. Interacts with the SNARE proteins SNAP-23 and VAMP.

It is found in the membrane. The protein localises to the golgi apparatus. The protein resides in the trans-Golgi network membrane. SNARE that acts to regulate protein transport between late endosomes and the trans-Golgi network. The sequence is that of Syntaxin-11 (STX11) from Homo sapiens (Human).